The following is a 353-amino-acid chain: MSVAGLKKQFHKATQKVSEKVGGAEGTKLDDDFKEMERKVDVTSRAVMEIMAKTIEYLQPNPASRAKLSMINTMSKIRGQEKGPGYPQAEALLADAMLKFGRELGEECNFGPALADVGEAMKELSEVKDSLDMEVKQNFIDPLQNLHDKDLREIQHHLKKMEGRRLDFDYKKKRQGKLPDEELRQALEKFDESKEIAESSMFNLLEMDIEQVSQLSALVQAQLEYHKQATQILQRVTSKLEDRIKEASSQPKREYQPKPRMSLDFTSGGDNTQHNGGISHATTPKPAGAHMDQPCCRALYDFEPENEGELGFKEGDIITLTNQIDENWYEGMLHGQSGFFPINYVDILVPLPN.

Residues 1 to 21 form a membrane-binding amphipathic helix region; the sequence is MSVAGLKKQFHKATQKVSEKV. A disordered region spans residues 1-27; it reads MSVAGLKKQFHKATQKVSEKVGGAEGT. A binds and tubulates liposomes region spans residues 1–125; it reads MSVAGLKKQF…DVGEAMKELS (125 aa). Residues 18–249 form the BAR domain; sequence SEKVGGAEGT…LEDRIKEASS (232 aa). Residues 60 to 87 are required for dimerization upon membrane association; the sequence is PNPASRAKLSMINTMSKIRGQEKGPGYP. Residues 181-201 adopt a coiled-coil conformation; it reads EELRQALEKFDESKEIAESSM. A compositionally biased stretch (basic and acidic residues) spans 243–257; it reads RIKEASSQPKREYQP. The tract at residues 243 to 290 is disordered; sequence RIKEASSQPKREYQPKPRMSLDFTSGGDNTQHNGGISHATTPKPAGAH. The segment covering 264–282 has biased composition (polar residues); it reads DFTSGGDNTQHNGGISHAT. Residues 291–350 enclose the SH3 domain; that stretch reads MDQPCCRALYDFEPENEGELGFKEGDIITLTNQIDENWYEGMLHGQSGFFPINYVDILVP.

It belongs to the endophilin family. As to quaternary structure, monomer; in cytoplasm. Homodimer; when associated with membranes. Associates with MAP4K3. This interaction appears to regulate MAP4K3-mediated JNK activation. Interacts with SYNJ1 and DNM1. As to expression, highly expressed in brain.

The protein localises to the cytoplasm. It localises to the membrane. The protein resides in the early endosome. It is found in the presynapse. In terms of biological role, implicated in synaptic vesicle endocytosis. May recruit other proteins to membranes with high curvature. This Gallus gallus (Chicken) protein is Endophilin-A1.